Here is a 161-residue protein sequence, read N- to C-terminus: Large ribosomal subunit protein uL15 (161 aa).

Positions 1-57 (MRLKDAIPKKGSQQRGRRVGRGISAGQGASCGKGMRGQKSRSGGSTRPGFEGGQNPL) are disordered. Residues 23–35 (ISAGQGASCGKGM) are compositionally biased toward gly residues.

It belongs to the universal ribosomal protein uL15 family. As to quaternary structure, part of the 50S ribosomal subunit.

Its function is as follows. Binds to the 23S rRNA. The protein is Large ribosomal subunit protein uL15 of Trichodesmium erythraeum (strain IMS101).